We begin with the raw amino-acid sequence, 486 residues long: ATP-dependent rRNA helicase RRP3 (486 aa).

Positions 1–58 (MNGAKRRKVAQDTPRNTKPVAQEKPARAEPKPSSDEESEEESATLEEPSAEETAVDAP) are disordered. Residues 24–34 (KPARAEPKPSS) are compositionally biased toward basic and acidic residues. The segment covering 35-54 (DEESEEESATLEEPSAEETA) has biased composition (acidic residues). A Q motif motif is present at residues 60–88 (KTFKDLGVNDALCEACEKLNYKYPTPIQE). The Helicase ATP-binding domain maps to 91–262 (IPVALQGRDI…RASLRDPVKV (172 aa)). Residue 104 to 111 (AETGSGKT) participates in ATP binding. The short motif at 210–213 (DEAD) is the DEAD box element. One can recognise a Helicase C-terminal domain in the interval 286–434 (QKDVHLIYLI…EYPTEKEEVM (149 aa)). Basic and acidic residues-rich tracts occupy residues 451-460 (MKSFTEERGK) and 476-486 (RGRDDMDREEG). Residues 451 to 486 (MKSFTEERGKKGSTLKGGRGKKGGKRGRDDMDREEG) are disordered.

It belongs to the DEAD box helicase family. DDX47/RRP3 subfamily. As to quaternary structure, interacts with the SSU processome.

Its subcellular location is the nucleus. It carries out the reaction ATP + H2O = ADP + phosphate + H(+). Functionally, ATP-dependent rRNA helicase required for pre-ribosomal RNA processing. Involved in the maturation of the 35S-pre-rRNA and to its cleavage to mature 18S rRNA. In Gibberella zeae (strain ATCC MYA-4620 / CBS 123657 / FGSC 9075 / NRRL 31084 / PH-1) (Wheat head blight fungus), this protein is ATP-dependent rRNA helicase RRP3.